Consider the following 186-residue polypeptide: Ribosome-recycling factor (186 aa).

Belongs to the RRF family.

Its subcellular location is the cytoplasm. In terms of biological role, responsible for the release of ribosomes from messenger RNA at the termination of protein biosynthesis. May increase the efficiency of translation by recycling ribosomes from one round of translation to another. The protein is Ribosome-recycling factor of Burkholderia mallei (strain NCTC 10247).